The primary structure comprises 329 residues: DNA-directed RNA polymerase subunit alpha (329 aa).

The alpha N-terminal domain (alpha-NTD) stretch occupies residues 1–234 (MQGSVTEFLK…EQLDAFVELR (234 aa)). The interval 248–329 (FDPILLRPVD…WPPASLADDL (82 aa)) is alpha C-terminal domain (alpha-CTD).

It belongs to the RNA polymerase alpha chain family. In terms of assembly, homodimer. The RNAP catalytic core consists of 2 alpha, 1 beta, 1 beta' and 1 omega subunit. When a sigma factor is associated with the core the holoenzyme is formed, which can initiate transcription.

The catalysed reaction is RNA(n) + a ribonucleoside 5'-triphosphate = RNA(n+1) + diphosphate. DNA-dependent RNA polymerase catalyzes the transcription of DNA into RNA using the four ribonucleoside triphosphates as substrates. This Shewanella sp. (strain ANA-3) protein is DNA-directed RNA polymerase subunit alpha.